A 153-amino-acid polypeptide reads, in one-letter code: Methylglyoxal synthase (153 aa).

The MGS-like domain occupies 6 to 153 (RTIAARKHIA…QRYLAERLPS (148 aa)). Substrate is bound by residues His-19, Lys-23, 45–48 (TGTT), and 65–66 (SG). The active-site Proton donor/acceptor is Asp-71. A substrate-binding site is contributed by His-98.

This sequence belongs to the methylglyoxal synthase family.

The enzyme catalyses dihydroxyacetone phosphate = methylglyoxal + phosphate. Its function is as follows. Catalyzes the formation of methylglyoxal from dihydroxyacetone phosphate. The protein is Methylglyoxal synthase of Sodalis glossinidius (strain morsitans).